A 560-amino-acid chain; its full sequence is Mannosyl-oligosaccharide 1,2-alpha-mannosidase MNS1 (560 aa).

Over 1–27 (MARSRSISGYGIWKYLNPAYYLRRPRR) the chain is Cytoplasmic. The helical; Signal-anchor for type II membrane protein transmembrane segment at 28-47 (LALLFIVFVSVSMLVWDRIN) threads the bilayer. Residues 47 to 80 (NLAREHEVEVFKLNEEVSRLEQMLEELNGGVGNK) are a coiled coil. The Lumenal segment spans residues 48-560 (LAREHEVEVF…QRKFGHQINV (513 aa)). The active-site Proton donor is glutamate 179. Residue aspartate 312 is part of the active site. N-linked (GlcNAc...) asparagine glycosylation is present at asparagine 326. A disulfide bridge links cysteine 377 with cysteine 409. The active-site Proton donor is the glutamate 423. Glutamate 445 is an active-site residue. N-linked (GlcNAc...) asparagine glycosylation occurs at asparagine 459. Threonine 529 is a Ca(2+) binding site.

This sequence belongs to the glycosyl hydrolase 47 family. The cofactor is Ca(2+). Mn(2+) is required as a cofactor. Mg(2+) serves as cofactor. As to expression, expressed in flowers, siliques, stems, leaves, roots, pollen grains, shoot apical meristems, hypocotyls and upper region of the root.

Its subcellular location is the golgi apparatus membrane. It carries out the reaction N(4)-(alpha-D-Man-(1-&gt;2)-alpha-D-Man-(1-&gt;2)-alpha-D-Man-(1-&gt;3)-[alpha-D-Man-(1-&gt;2)-alpha-D-Man-(1-&gt;3)-[alpha-D-Man-(1-&gt;2)-alpha-D-Man-(1-&gt;6)]-alpha-D-Man-(1-&gt;6)]-beta-D-Man-(1-&gt;4)-beta-D-GlcNAc-(1-&gt;4)-beta-D-GlcNAc)-L-asparaginyl-[protein] (N-glucan mannose isomer 9A1,2,3B1,2,3) + 4 H2O = N(4)-(alpha-D-Man-(1-&gt;3)-[alpha-D-Man-(1-&gt;3)-[alpha-D-Man-(1-&gt;6)]-alpha-D-Man-(1-&gt;6)]-beta-D-Man-(1-&gt;4)-beta-D-GlcNAc-(1-&gt;4)-beta-D-GlcNAc)-L-asparaginyl-[protein] (N-glucan mannose isomer 5A1,2) + 4 beta-D-mannose. The enzyme catalyses N(4)-(alpha-D-Man-(1-&gt;2)-alpha-D-Man-(1-&gt;2)-alpha-D-Man-(1-&gt;3)-[alpha-D-Man-(1-&gt;3)-[alpha-D-Man-(1-&gt;2)-alpha-D-Man-(1-&gt;6)]-alpha-D-Man-(1-&gt;6)]-beta-D-Man-(1-&gt;4)-beta-D-GlcNAc-(1-&gt;4)-beta-D-GlcNAc)-L-asparaginyl-[protein] (N-glucan mannose isomer 8A1,2,3B1,3) + 3 H2O = N(4)-(alpha-D-Man-(1-&gt;3)-[alpha-D-Man-(1-&gt;3)-[alpha-D-Man-(1-&gt;6)]-alpha-D-Man-(1-&gt;6)]-beta-D-Man-(1-&gt;4)-beta-D-GlcNAc-(1-&gt;4)-beta-D-GlcNAc)-L-asparaginyl-[protein] (N-glucan mannose isomer 5A1,2) + 3 beta-D-mannose. The catalysed reaction is N(4)-(alpha-D-Man-(1-&gt;2)-alpha-D-Man-(1-&gt;2)-alpha-D-Man-(1-&gt;3)-[alpha-D-Man-(1-&gt;2)-alpha-D-Man-(1-&gt;3)-[alpha-D-Man-(1-&gt;2)-alpha-D-Man-(1-&gt;6)]-alpha-D-Man-(1-&gt;6)]-beta-D-Man-(1-&gt;4)-beta-D-GlcNAc-(1-&gt;4)-beta-D-GlcNAc)-L-asparaginyl-[protein] (N-glucan mannose isomer 9A1,2,3B1,2,3) + H2O = N(4)-(alpha-D-Man-(1-&gt;2)-alpha-D-Man-(1-&gt;2)-alpha-D-Man-(1-&gt;3)-[alpha-D-Man-(1-&gt;3)-[alpha-D-Man-(1-&gt;2)-alpha-D-Man-(1-&gt;6)]-alpha-D-Man-(1-&gt;6)]-beta-D-Man-(1-&gt;4)-beta-D-GlcNAc-(1-&gt;4)-beta-D-GlcNAc)-L-asparaginyl-[protein] (N-glucan mannose isomer 8A1,2,3B1,3) + beta-D-mannose. It functions in the pathway protein modification; protein glycosylation. Inhibited by kifunensine and 1-deoxymannojirimycin, but not by swainsonine. Functionally, class I alpha-mannosidase essential for early N-glycan processing. Progressively trims alpha-1,2-linked mannose residues. Produces Man(5)GlcNAc(2) from Man(8)GlcNAc(2), but only Man(6)GlcNAc(2) from Man(9)GlcNAc(2). Has difficulty acting on the terminal mannose of the b-branch. Involved in root development and cell wall biosynthesis. In Arabidopsis thaliana (Mouse-ear cress), this protein is Mannosyl-oligosaccharide 1,2-alpha-mannosidase MNS1 (MNS1).